The primary structure comprises 468 residues: Hexokinase (468 aa).

Positions 10–466 constitute a Hexokinase domain; that stretch reads AKQLAELEVV…SGKGAALIAD (457 aa). The interval 74-225 is hexokinase small subdomain; the sequence is TGAEVGEAYA…NVPAVCKAIV (152 aa). Residue 85-90 coordinates ATP; sequence DFGGST. Residues 163-189 form a glucose-binding region; it reads PVGFTFSFPCAQAALNSSFLIEWTKGF. Residues 226 to 455 are hexokinase large subdomain; sequence NDTVGTLVSC…KNIHYCIADD (230 aa).

This sequence belongs to the hexokinase family.

It catalyses the reaction a D-hexose + ATP = a D-hexose 6-phosphate + ADP + H(+). The enzyme catalyses D-mannose + ATP = D-mannose 6-phosphate + ADP + H(+). The catalysed reaction is D-fructose + ATP = D-fructose 6-phosphate + ADP + H(+). It carries out the reaction D-glucose + ATP = D-glucose 6-phosphate + ADP + H(+). The protein operates within carbohydrate metabolism; hexose metabolism. It participates in carbohydrate degradation; glycolysis; D-glyceraldehyde 3-phosphate and glycerone phosphate from D-glucose: step 1/4. In terms of biological role, catalyzes the phosphorylation of various hexoses to hexose 6-phosphate. The polypeptide is Hexokinase (HXK) (Toxoplasma gondii).